The following is a 183-amino-acid chain: Archaemetzincin (183 aa).

Residue His-131 participates in Zn(2+) binding. Glu-132 serves as the catalytic Proton acceptor. Zn(2+)-binding residues include His-135, His-141, Cys-142, Cys-147, Cys-166, and Cys-169.

This sequence belongs to the peptidase M54 family. As to quaternary structure, monomer. It depends on Zn(2+) as a cofactor.

Probable zinc metalloprotease whose natural substrate is unknown. This chain is Archaemetzincin, found in Saccharolobus islandicus (strain Y.N.15.51 / Yellowstone #2) (Sulfolobus islandicus).